We begin with the raw amino-acid sequence, 518 residues long: Membrane-bound lytic murein transglycosylase F (518 aa).

An N-terminal signal peptide occupies residues Met1–Ala21. The tract at residues Leu22–Gly269 is non-LT domain. The segment at Asp270–Asn518 is LT domain. Residue Glu314 is part of the active site.

This sequence in the N-terminal section; belongs to the bacterial solute-binding protein 3 family. In the C-terminal section; belongs to the transglycosylase Slt family.

Its subcellular location is the cell outer membrane. It catalyses the reaction Exolytic cleavage of the (1-&gt;4)-beta-glycosidic linkage between N-acetylmuramic acid (MurNAc) and N-acetylglucosamine (GlcNAc) residues in peptidoglycan, from either the reducing or the non-reducing ends of the peptidoglycan chains, with concomitant formation of a 1,6-anhydrobond in the MurNAc residue.. Functionally, murein-degrading enzyme that degrades murein glycan strands and insoluble, high-molecular weight murein sacculi, with the concomitant formation of a 1,6-anhydromuramoyl product. Lytic transglycosylases (LTs) play an integral role in the metabolism of the peptidoglycan (PG) sacculus. Their lytic action creates space within the PG sacculus to allow for its expansion as well as for the insertion of various structures such as secretion systems and flagella. This is Membrane-bound lytic murein transglycosylase F from Escherichia coli O6:K15:H31 (strain 536 / UPEC).